Here is a 469-residue protein sequence, read N- to C-terminus: 3-isopropylmalate dehydratase large subunit (469 aa).

Cys-347, Cys-410, and Cys-413 together coordinate [4Fe-4S] cluster.

The protein belongs to the aconitase/IPM isomerase family. LeuC type 1 subfamily. Heterodimer of LeuC and LeuD. Requires [4Fe-4S] cluster as cofactor.

The enzyme catalyses (2R,3S)-3-isopropylmalate = (2S)-2-isopropylmalate. It functions in the pathway amino-acid biosynthesis; L-leucine biosynthesis; L-leucine from 3-methyl-2-oxobutanoate: step 2/4. Catalyzes the isomerization between 2-isopropylmalate and 3-isopropylmalate, via the formation of 2-isopropylmaleate. The polypeptide is 3-isopropylmalate dehydratase large subunit (Cupriavidus pinatubonensis (strain JMP 134 / LMG 1197) (Cupriavidus necator (strain JMP 134))).